A 115-amino-acid polypeptide reads, in one-letter code: U3-lycotoxin-Ls1k (115 aa).

Residues 1 to 20 (MKFVLLFGVLLVTLFSYSSA) form the signal peptide. Residues 21-44 (EMFDDFDQADEDELLSLIEKEEAR) constitute a propeptide that is removed on maturation. 4 disulfides stabilise this stretch: Cys-48/Cys-63, Cys-55/Cys-72, Cys-62/Cys-87, and Cys-74/Cys-85.

This sequence belongs to the neurotoxin 19 (CSTX) family. 01 subfamily. Expressed by the venom gland.

The protein resides in the secreted. In Lycosa singoriensis (Wolf spider), this protein is U3-lycotoxin-Ls1k.